The chain runs to 220 residues: Large ribosomal subunit protein uL16 (220 aa).

The protein belongs to the universal ribosomal protein uL16 family. In terms of assembly, component of the small ribosomal subunit. Mature ribosomes consist of a small (40S) and a large (60S) subunit. The 40S subunit contains about 33 different proteins and 1 molecule of RNA (18S). The 60S subunit contains about 49 different proteins and 3 molecules of RNA (25S, 5.8S and 5S).

The chain is Large ribosomal subunit protein uL16 (RPL10) from Zea mays (Maize).